We begin with the raw amino-acid sequence, 716 residues long: Radial spoke head protein 4 homolog A (716 aa).

Disordered stretches follow at residues 1-164, 375-410, 506-526, and 697-716; these read MEDS…CGRR, EGED…PKSF, GEEE…FEEN, and LLAA…DDYD. Over residues 8–25 the composition is skewed to basic and acidic residues; that stretch reads KQEKENQEELGETRRPWE. Low complexity-rich tracts occupy residues 29-42, 54-66, and 80-100; these read AASP…SSEP, QSRS…PQSR, and SSPA…LAPA. A compositionally biased stretch (polar residues) spans 140–156; the sequence is HHTSQSEGNTFQQSQQP. Over residues 375-389 the composition is skewed to acidic residues; it reads EGEDEEEVEEEDVAE. Ser396 is modified (phosphoserine). Composition is skewed to acidic residues over residues 506 to 516 and 701 to 716; these read GEEEGEEEEEA and ENEE…DDYD.

It belongs to the flagellar radial spoke RSP4/6 family. As to quaternary structure, interacts with RSPH6A. Expressed in trachea, lungs, and testes. Very strong expression is detected in nasal brushings.

It is found in the cytoplasm. It localises to the cytoskeleton. The protein localises to the cilium axoneme. The protein resides in the cell projection. Its subcellular location is the cilium. In terms of biological role, component of the axonemal radial spoke head which plays an important role in ciliary motility. Essential for triplet radial spokes (RS1, RS2 and RS3) head assembly in the motile cilia. The sequence is that of Radial spoke head protein 4 homolog A (RSPH4A) from Homo sapiens (Human).